A 715-amino-acid polypeptide reads, in one-letter code: Polyribonucleotide nucleotidyltransferase (715 aa).

Asp488 and Asp494 together coordinate Mg(2+). Residues 555-614 (PRIEVMHIPTDKIRDVIGTGGKVIREIVEKTGAKINIEDDGTVKIASSNGKEIEAARKWI) enclose the KH domain. An S1 motif domain is found at 624–692 (GEIYEGTVVK…ERGKVRLSMK (69 aa)).

It belongs to the polyribonucleotide nucleotidyltransferase family. Requires Mg(2+) as cofactor.

Its subcellular location is the cytoplasm. It carries out the reaction RNA(n+1) + phosphate = RNA(n) + a ribonucleoside 5'-diphosphate. Functionally, involved in mRNA degradation. Catalyzes the phosphorolysis of single-stranded polyribonucleotides processively in the 3'- to 5'-direction. This Chelativorans sp. (strain BNC1) protein is Polyribonucleotide nucleotidyltransferase.